The primary structure comprises 443 residues: Thymidine phosphorylase (443 aa).

This sequence belongs to the thymidine/pyrimidine-nucleoside phosphorylase family. In terms of assembly, homodimer.

It catalyses the reaction thymidine + phosphate = 2-deoxy-alpha-D-ribose 1-phosphate + thymine. It participates in pyrimidine metabolism; dTMP biosynthesis via salvage pathway; dTMP from thymine: step 1/2. Functionally, the enzymes which catalyze the reversible phosphorolysis of pyrimidine nucleosides are involved in the degradation of these compounds and in their utilization as carbon and energy sources, or in the rescue of pyrimidine bases for nucleotide synthesis. The sequence is that of Thymidine phosphorylase from Aliivibrio salmonicida (strain LFI1238) (Vibrio salmonicida (strain LFI1238)).